The sequence spans 295 residues: Glutamyl-Q tRNA(Asp) synthetase (295 aa).

Residues 5-9 and glutamate 41 contribute to the L-glutamate site; that span reads RFAPS. Residues 8 to 18 carry the 'HIGH' region motif; the sequence is PSPTGLLHIGS. 4 residues coordinate Zn(2+): cysteine 97, cysteine 99, tyrosine 117, and cysteine 121. Positions 178 and 196 each coordinate L-glutamate. A 'KMSKS' region motif is present at residues 234 to 238; that stretch reads KWSKQ. Position 237 (lysine 237) interacts with ATP.

The protein belongs to the class-I aminoacyl-tRNA synthetase family. GluQ subfamily. The cofactor is Zn(2+).

Its function is as follows. Catalyzes the tRNA-independent activation of glutamate in presence of ATP and the subsequent transfer of glutamate onto a tRNA(Asp). Glutamate is transferred on the 2-amino-5-(4,5-dihydroxy-2-cyclopenten-1-yl) moiety of the queuosine in the wobble position of the QUC anticodon. The chain is Glutamyl-Q tRNA(Asp) synthetase from Neisseria meningitidis serogroup C / serotype 2a (strain ATCC 700532 / DSM 15464 / FAM18).